A 430-amino-acid polypeptide reads, in one-letter code: Small ribosomal subunit protein uS5m (430 aa).

The interval 108–128 is disordered; the sequence is AGARKGRGKRTKRKRRKDLNR. The span at 111–125 shows a compositional bias: basic residues; sequence RKGRGKRTKRKRRKD. The S5 DRBM domain occupies 218 to 282; that stretch reads FDTRILEVRN…NRAVHYLHYI (65 aa).

It belongs to the universal ribosomal protein uS5 family. Component of the mitochondrial ribosome small subunit (28S) which comprises a 12S rRNA and about 30 distinct proteins.

The protein localises to the mitochondrion. The chain is Small ribosomal subunit protein uS5m (MRPS5) from Bos taurus (Bovine).